Reading from the N-terminus, the 100-residue chain is NADH-quinone oxidoreductase subunit K (100 aa).

Helical transmembrane passes span 3 to 23 (PTAYYVALSGLLFAIGMIGVL), 29 to 49 (IMIFLSVELMLNAANLALVAF), and 63 to 83 (FIVMTLAAAEVAIGLAIIVAI).

Belongs to the complex I subunit 4L family. In terms of assembly, NDH-1 is composed of 15 different subunits. Subunits NuoA, H, J, K, L, M, N constitute the membrane sector of the complex.

The protein localises to the cell membrane. It catalyses the reaction a quinone + NADH + 5 H(+)(in) = a quinol + NAD(+) + 4 H(+)(out). In terms of biological role, NDH-1 shuttles electrons from NADH, via FMN and iron-sulfur (Fe-S) centers, to quinones in the respiratory chain. The immediate electron acceptor for the enzyme in this species is believed to be a menaquinone. Couples the redox reaction to proton translocation (for every two electrons transferred, four hydrogen ions are translocated across the cytoplasmic membrane), and thus conserves the redox energy in a proton gradient. The sequence is that of NADH-quinone oxidoreductase subunit K from Deinococcus geothermalis (strain DSM 11300 / CIP 105573 / AG-3a).